An 890-amino-acid chain; its full sequence is Possible lysine-specific histone demethylase 1 (890 aa).

Residues 1 to 13 (MKPTQFGGSSSKM) are compositionally biased toward polar residues. The tract at residues 1–164 (MKPTQFGGSS…TVLSGQEGAV (164 aa)) is disordered. Residues Ser-24 and Ser-27 each carry the phosphoserine modification. Residues 84 to 109 (NRPSGSGDTASNDKSGSASMGPNNQQ) show a composition bias toward polar residues. The segment covering 110–122 (AERRSQSQTRKSE) has biased composition (basic and acidic residues). The segment covering 123-138 (ANATSSSVSGPSAGNS) has biased composition (low complexity). One can recognise an SWIRM domain in the interval 160-259 (QEGAVFQSRL…FGIFKRLKPI (100 aa)). 267-295 (VIVIGAGISGLAVAHQLQQFGMDVIVLEA) contacts FAD. The interval 860-890 (DLSPNLSDSSPSSKKSEENSNSNTADSTELQ) is disordered. The span at 861–882 (LSPNLSDSSPSSKKSEENSNSN) shows a compositional bias: low complexity. Position 866 is a phosphoserine (Ser-866).

This sequence belongs to the flavin monoamine oxidase family. Component of a complex that contains at least HDAC1/Rpd3, CoRest and Su(var)3-3/Hdm. FAD serves as cofactor.

It localises to the nucleus. The protein localises to the chromosome. In terms of biological role, probable histone demethylase that specifically demethylates 'Lys-4' of histone H3, a specific tag for epigenetic transcriptional activation, thereby acting as a corepressor. Required for heterochromatic gene silencing. Acts by oxidizing the substrate by FAD to generate the corresponding imine that is subsequently hydrolyzed. Demethylates both mono- and tri-methylated 'Lys-4' of histone H3. May also demethylate 'Lys-9' of histone H3, Plays a role in the repression of neuronal genes. The protein is Possible lysine-specific histone demethylase 1 (Su(var)3-3) of Drosophila melanogaster (Fruit fly).